The sequence spans 1128 residues: Testis-expressed protein 2 (1128 aa).

3 disordered regions span residues 1 to 28 (MTSLNGRHAEKTIDMPKPSAPKVHVQRS), 71 to 99 (AKEDLYLESQGGHDPAGPVSTAPADGLSV), and 130 to 279 (PLAL…FFKV). Over residues 130–186 (PLALSPGSSSSGPLASSPSVSSLSEQKTSSSSPLSSPSKSPVLSSSASSSALSSAKP) the composition is skewed to low complexity. Ser195 bears the Phosphoserine mark. A compositionally biased stretch (polar residues) spans 248-274 (QFTQPRNTGGDSKTAPSSPLTSPSDTR). At Thr261 the chain carries Phosphothreonine. Phosphoserine occurs at positions 264, 265, 269, and 294. A disordered region spans residues 345-387 (KEEEGDSEGEGYGSDSNTSRSDHLKPTEDASKEVEPKGSQASS). The segment covering 364-380 (RSDHLKPTEDASKEVEP) has biased composition (basic and acidic residues). Helical transmembrane passes span 473–493 (TLGFFIMCVYAYLILPLPYYM) and 495–515 (GLFLGVGLGFMTAVCMIWFFT). A glycan (N-linked (GlcNAc...) asparagine) is linked at Asn593. Residues 645–671 (SKAQSDKEATEEKPPPEKELPSEDLKK) are compositionally biased toward basic and acidic residues. Disordered stretches follow at residues 645-688 (SKAQ…DPIL), 716-765 (RKPA…QKEL), 787-821 (QDNRSPHRSPVQSAESSPTASKKLPEAPPSEEEEQ), and 945-981 (ADSDEESSSAGSSEEDDPPEPTAGDKQPLPGAEGYVG). Residues Ser733, Ser739, Ser745, Ser749, Ser752, Ser799, and Ser816 each carry the phosphoserine modification. Over residues 736–751 (SSPSGHLSHSRSSSKG) the composition is skewed to low complexity. Residues 796–806 (PVQSAESSPTA) show a composition bias toward polar residues. The SMP-LTD domain occupies 817–1102 (EEEEQEAWVN…MPNMDDVYIP (286 aa)). Over residues 946-963 (DSDEESSSAGSSEEDDPP) the composition is skewed to acidic residues.

Its subcellular location is the endoplasmic reticulum membrane. It is found in the nucleus membrane. Functionally, during endoplasmic reticulum (ER) stress or when cellular ceramide levels increase, may induce contacts between the ER and medial-Golgi complex to facilitate non-vesicular transport of ceramides from the ER to the Golgi complex where they are converted to complex sphingolipids, preventing toxic ceramide accumulation. This is Testis-expressed protein 2 (Tex2) from Mus musculus (Mouse).